The sequence spans 529 residues: T-complex protein 1 subunit beta (529 aa).

The protein belongs to the TCP-1 chaperonin family. As to quaternary structure, heterooligomeric complex of about 850 to 900 kDa that forms two stacked rings, 12 to 16 nm in diameter.

Its subcellular location is the cytoplasm. Molecular chaperone; assists the folding of proteins upon ATP hydrolysis. Known to play a role, in vitro, in the folding of actin and tubulin. The chain is T-complex protein 1 subunit beta (cct-2) from Caenorhabditis elegans.